A 178-amino-acid polypeptide reads, in one-letter code: Large ribosomal subunit protein uL6 (178 aa).

This sequence belongs to the universal ribosomal protein uL6 family. As to quaternary structure, part of the 50S ribosomal subunit.

Its function is as follows. This protein binds to the 23S rRNA, and is important in its secondary structure. It is located near the subunit interface in the base of the L7/L12 stalk, and near the tRNA binding site of the peptidyltransferase center. The protein is Large ribosomal subunit protein uL6 of Streptococcus pyogenes serotype M3 (strain ATCC BAA-595 / MGAS315).